The sequence spans 711 residues: Ribosomal RNA large subunit methyltransferase K/L (711 aa).

One can recognise a THUMP domain in the interval 42-153 (DAQRAVLWSR…KGRATISVDL (112 aa)).

The protein belongs to the methyltransferase superfamily. RlmKL family.

The protein localises to the cytoplasm. The enzyme catalyses guanosine(2445) in 23S rRNA + S-adenosyl-L-methionine = N(2)-methylguanosine(2445) in 23S rRNA + S-adenosyl-L-homocysteine + H(+). The catalysed reaction is guanosine(2069) in 23S rRNA + S-adenosyl-L-methionine = N(2)-methylguanosine(2069) in 23S rRNA + S-adenosyl-L-homocysteine + H(+). Specifically methylates the guanine in position 2445 (m2G2445) and the guanine in position 2069 (m7G2069) of 23S rRNA. In Xanthomonas campestris pv. campestris (strain B100), this protein is Ribosomal RNA large subunit methyltransferase K/L.